We begin with the raw amino-acid sequence, 445 residues long: 3-dehydroquinate synthase, chloroplastic (445 aa).

A chloroplast-targeting transit peptide spans 1-68 (MAAFSLSAKQ…RASASSTAPV (68 aa)). NAD(+) is bound by residues Asn122, 153 to 155 (DGE), Lys158, 186 to 191 (GGVIGD), 211 to 212 (TT), Lys224, Lys233, and 251 to 254 (TLNT). Residue Glu266 coordinates a divalent metal cation. Lys308 serves as a coordination point for NAD(+). Residues His329 and His346 each coordinate a divalent metal cation.

It belongs to the sugar phosphate cyclases superfamily. Dehydroquinate synthase family. In terms of assembly, homodimer. Requires a divalent metal cation as cofactor. NAD(+) serves as cofactor.

It is found in the plastid. It localises to the chloroplast. The catalysed reaction is 7-phospho-2-dehydro-3-deoxy-D-arabino-heptonate = 3-dehydroquinate + phosphate. It participates in metabolic intermediate biosynthesis; chorismate biosynthesis; chorismate from D-erythrose 4-phosphate and phosphoenolpyruvate: step 2/7. Catalyzes the second step in the shikimate pathway. This is 3-dehydroquinate synthase, chloroplastic (DHQS) from Actinidia chinensis var. chinensis (Chinese soft-hair kiwi).